The following is a 272-amino-acid chain: MTFTEQLSAAWQRNDSLLCVGLDPDPAKLPLSMTGTGGAIFSFCREIVDATADLVCAFKPQIAYFHSQRAEDQLEQLVEYIHDAHPGVPVILDAKRGDIGSTAEHYAIEAFERYKADAVTVSPYMGFDSMSPYLAYPGKGVIVLCRTSNPGGSDVQFLQVDGKPLYQVVAEAARERWNTNGQMGLVVGATFPNEIAKVRQIVGDMPLLIPGIGAQGGDIEATVKAGRTADGTGMMINSSRAILYASREKDFALAARNVALQTRETINRYRHG.

Lysine 95 (proton donor) is an active-site residue.

Belongs to the OMP decarboxylase family. Type 2 subfamily.

The enzyme catalyses orotidine 5'-phosphate + H(+) = UMP + CO2. The protein operates within pyrimidine metabolism; UMP biosynthesis via de novo pathway; UMP from orotate: step 2/2. This is Orotidine 5'-phosphate decarboxylase from Cupriavidus metallidurans (strain ATCC 43123 / DSM 2839 / NBRC 102507 / CH34) (Ralstonia metallidurans).